A 456-amino-acid chain; its full sequence is Hydroxyproline dehydrogenase (456 aa).

An N6-acetyllysine mark is found at Lys-310 and Lys-320.

It belongs to the proline oxidase family. It depends on FAD as a cofactor.

It catalyses the reaction trans-4-hydroxy-L-proline + a quinone = (3R,5S)-1-pyrroline-3-hydroxy-5-carboxylate + a quinol + H(+). It carries out the reaction L-proline + a quinone = (S)-1-pyrroline-5-carboxylate + a quinol + H(+). Dehydrogenase that converts trans-4-L-hydroxyproline to delta-1-pyrroline-3-hydroxy-5-carboxylate (Hyp) using ubiquinone-10 as the terminal electron acceptor. Can also use proline as a substrate but with a very much lower efficiency. Does not react with other diastereomers of Hyp: trans-4-D-hydroxyproline and cis-4-L-hydroxyproline. Ubiquininone analogs such as menadione, duroquinone and ubiquinone-1 react more efficiently than oxygen as the terminal electron acceptor during catalysis. The polypeptide is Hydroxyproline dehydrogenase (Mus musculus (Mouse)).